Here is a 62-residue protein sequence, read N- to C-terminus: Photosystem II reaction center protein Z (62 aa).

2 consecutive transmembrane segments (helical) span residues Ser8–Ala28 and Phe41–Ile61.

The protein belongs to the PsbZ family. PSII is composed of 1 copy each of membrane proteins PsbA, PsbB, PsbC, PsbD, PsbE, PsbF, PsbH, PsbI, PsbJ, PsbK, PsbL, PsbM, PsbT, PsbY, PsbZ, Psb30/Ycf12, at least 3 peripheral proteins of the oxygen-evolving complex and a large number of cofactors. It forms dimeric complexes.

The protein localises to the plastid. It is found in the chloroplast thylakoid membrane. May control the interaction of photosystem II (PSII) cores with the light-harvesting antenna, regulates electron flow through the 2 photosystem reaction centers. PSII is a light-driven water plastoquinone oxidoreductase, using light energy to abstract electrons from H(2)O, generating a proton gradient subsequently used for ATP formation. The protein is Photosystem II reaction center protein Z of Chaetosphaeridium globosum (Charophycean green alga).